We begin with the raw amino-acid sequence, 98 residues long: MAKEPTQNVQDVFLNHVRRSKTPVTVFLVNGVKLQGIITWFDNFSVLLRRDGHTQLVYKHAISTVMPATPVVLFDPSRTEGATVDLTEKDLAGDADLL.

A Sm domain is found at Asp11–Val71.

The protein belongs to the Hfq family. As to quaternary structure, homohexamer.

Its function is as follows. RNA chaperone that binds small regulatory RNA (sRNAs) and mRNAs to facilitate mRNA translational regulation in response to envelope stress, environmental stress and changes in metabolite concentrations. Also binds with high specificity to tRNAs. The chain is RNA-binding protein Hfq from Gluconacetobacter diazotrophicus (strain ATCC 49037 / DSM 5601 / CCUG 37298 / CIP 103539 / LMG 7603 / PAl5).